The following is a 199-amino-acid chain: Adenosylcobinamide-GDP ribazoletransferase (199 aa).

Helical transmembrane passes span 2–22 (LAGG…VFAV) and 61–81 (IAAV…VAAL).

This sequence belongs to the CobS family. Requires Mg(2+) as cofactor.

It is found in the cell membrane. The catalysed reaction is alpha-ribazole + adenosylcob(III)inamide-GDP = adenosylcob(III)alamin + GMP + H(+). It carries out the reaction alpha-ribazole 5'-phosphate + adenosylcob(III)inamide-GDP = adenosylcob(III)alamin 5'-phosphate + GMP + H(+). It functions in the pathway cofactor biosynthesis; adenosylcobalamin biosynthesis; adenosylcobalamin from cob(II)yrinate a,c-diamide: step 7/7. In terms of biological role, joins adenosylcobinamide-GDP and alpha-ribazole to generate adenosylcobalamin (Ado-cobalamin). Also synthesizes adenosylcobalamin 5'-phosphate from adenosylcobinamide-GDP and alpha-ribazole 5'-phosphate. This is Adenosylcobinamide-GDP ribazoletransferase from Halobacterium salinarum (strain ATCC 700922 / JCM 11081 / NRC-1) (Halobacterium halobium).